A 538-amino-acid polypeptide reads, in one-letter code: Phosphoenolpyruvate carboxykinase (ATP) (538 aa).

Residues arginine 64, tyrosine 205, and lysine 211 each contribute to the substrate site. Residues lysine 211, histidine 230, and 246–254 (GLSGTGKTT) contribute to the ATP site. 2 residues coordinate Mn(2+): lysine 211 and histidine 230. A Mn(2+)-binding site is contributed by aspartate 267. ATP contacts are provided by residues glutamate 295, arginine 331, 447 to 448 (RI), and threonine 453. Arginine 331 is a substrate binding site.

This sequence belongs to the phosphoenolpyruvate carboxykinase (ATP) family. As to quaternary structure, monomer. It depends on Mn(2+) as a cofactor.

It is found in the cytoplasm. It catalyses the reaction oxaloacetate + ATP = phosphoenolpyruvate + ADP + CO2. It participates in carbohydrate biosynthesis; gluconeogenesis. Functionally, involved in the gluconeogenesis. Catalyzes the conversion of oxaloacetate (OAA) to phosphoenolpyruvate (PEP) through direct phosphoryl transfer between the nucleoside triphosphate and OAA. This Haemophilus influenzae (strain ATCC 51907 / DSM 11121 / KW20 / Rd) protein is Phosphoenolpyruvate carboxykinase (ATP).